The following is an 879-amino-acid chain: Phosphoenolpyruvate carboxylase (879 aa).

Catalysis depends on residues His-138 and Lys-545.

The protein belongs to the PEPCase type 1 family. Mg(2+) is required as a cofactor.

It carries out the reaction oxaloacetate + phosphate = phosphoenolpyruvate + hydrogencarbonate. In terms of biological role, forms oxaloacetate, a four-carbon dicarboxylic acid source for the tricarboxylic acid cycle. The protein is Phosphoenolpyruvate carboxylase (ppc) of Haemophilus influenzae (strain ATCC 51907 / DSM 11121 / KW20 / Rd).